A 527-amino-acid polypeptide reads, in one-letter code: Bifunctional purine biosynthesis protein PurH (527 aa).

Residues 1–149 (MTADLLPVRR…KNFARVAVAT (149 aa)) enclose the MGS-like domain.

The protein belongs to the PurH family.

The enzyme catalyses (6R)-10-formyltetrahydrofolate + 5-amino-1-(5-phospho-beta-D-ribosyl)imidazole-4-carboxamide = 5-formamido-1-(5-phospho-D-ribosyl)imidazole-4-carboxamide + (6S)-5,6,7,8-tetrahydrofolate. The catalysed reaction is IMP + H2O = 5-formamido-1-(5-phospho-D-ribosyl)imidazole-4-carboxamide. It participates in purine metabolism; IMP biosynthesis via de novo pathway; 5-formamido-1-(5-phospho-D-ribosyl)imidazole-4-carboxamide from 5-amino-1-(5-phospho-D-ribosyl)imidazole-4-carboxamide (10-formyl THF route): step 1/1. It functions in the pathway purine metabolism; IMP biosynthesis via de novo pathway; IMP from 5-formamido-1-(5-phospho-D-ribosyl)imidazole-4-carboxamide: step 1/1. The chain is Bifunctional purine biosynthesis protein PurH from Stenotrophomonas maltophilia (strain K279a).